Reading from the N-terminus, the 370-residue chain is MVKPCWRIGAGMERSKINPTKVDGLTWYKDLGLHTFGEFSMAMIQANSVMEDQCQIESGPLTFNNPTVQGTFVGVYDGHGGPEASRFIADNIFPKLKKFASEGREISEQVISKAFAETDKDFLKTVTKQWPTNPQMASVGSCCLAGVICNGLVYIANTGDSRAVLGRSERGGVRAVQLSVEHNANLESARQELWSLHPNDPTILVMKHRLWRVKGVIQVTRSIGDAYLKRAEFNREPLLPKFRLPEHFTKPILSADPSVTITRLSPQDEFIILASDGLWEHLSNQEAVDIVHNSPRQGIARRLLKAALKEAAKKREMRYSDLTEIHPGVRRHFHDDITVIVVYLNPHPVKTNSWASPLSIRGGYPMHSTS.

Residues 35-344 enclose the PPM-type phosphatase domain; it reads TFGEFSMAMI…DDITVIVVYL (310 aa). Mn(2+) is bound by residues aspartate 77, glycine 78, aspartate 276, and aspartate 335.

This sequence belongs to the PP2C family. Interacts with SAUR19. Interacts with AHA2 at the plasma membrane. Mg(2+) serves as cofactor. It depends on Mn(2+) as a cofactor.

Its subcellular location is the cell membrane. The enzyme catalyses O-phospho-L-seryl-[protein] + H2O = L-seryl-[protein] + phosphate. It catalyses the reaction O-phospho-L-threonyl-[protein] + H2O = L-threonyl-[protein] + phosphate. Its function is as follows. Dephosphorylates and represses plasma membrane H(+)-ATPases (PM H(+)-ATPases, e.g. AHA1 and AHA2), thus influencing negatively plant growth and fitness. Promotes the apical hook maintenance of etiolated seedlings. This chain is Probable protein phosphatase 2C 67, found in Arabidopsis thaliana (Mouse-ear cress).